The primary structure comprises 303 residues: MRLFNWRRQAALNAMPLVKPDQVRTPWHEFWRRFRRQHMAMTAALFVILLIVVAIFARWIAPYDAENYFDYDNLNNGPSLQHWFGVDSLGRDIFSRVLVGAQISLAAGVFAVFIGAAIGTLLGLLAGYYEGWWDRLIMRICDVLFAFPGILLAIAVVAVLGSGIANVIIAVAIFSIPAFARLVRGNTLVLKQQTFIESARSIGASDMTILLRHILPGTVSSIVVFFTMRIGTSIISAASLSFLGLGAQPPTPEWGAMLNEARADMVIAPHVAVFPALAIFLTVLAFNLLGDGLRDALDPKIKG.

The next 6 membrane-spanning stretches (helical) occupy residues 40–60 (AMTA…ARWI), 105–125 (LAAG…LGLL), 144–164 (LFAF…GSGI), 165–185 (ANVI…LVRG), 222–242 (IVVF…SLSF), and 266–286 (VIAP…VLAF). An ABC transmembrane type-1 domain is found at 101 to 290 (AQISLAAGVF…LTVLAFNLLG (190 aa)).

It belongs to the binding-protein-dependent transport system permease family. In terms of assembly, the complex is composed of two ATP-binding proteins (GsiA), two transmembrane proteins (GsiC and GsiD) and a solute-binding protein (GsiB).

It is found in the cell inner membrane. Functionally, part of the ABC transporter complex GsiABCD involved in glutathione import. Probably responsible for the translocation of the substrate across the membrane. This is Glutathione transport system permease protein GsiD from Escherichia coli O6:K15:H31 (strain 536 / UPEC).